The sequence spans 246 residues: MAAAPPAAVSEPTAARQKLLALLGQVQTYVFQLELLRRCDPQIGLGKLAQLKLNALQVRVLRRHLRPGLEAQAAAFLTPLSVTLELLLEYAWREGERLLGHLDTFATTGDVSAFFTETMGLARPCPYHQQIRLETYGGDVRMELCFLHDVENFLKQLNYCHLTTPPSGATAALERVREFMVAAVGSGLIVPPELSDPSHPCAVCFEELCVTANQGATIARRLADRICNHVTQQAQVRLDANELRRY.

The protein belongs to the herpesviridae PRTP family.

Functionally, this protein may affect translocation of the virus glycoproteins to membranes. It is involved in capsid maturation. The chain is Processing and transport protein (UL28) from Homo sapiens (Human).